The sequence spans 340 residues: Heat-inducible transcription repressor HrcA (340 aa).

This sequence belongs to the HrcA family.

Functionally, negative regulator of class I heat shock genes (grpE-dnaK-dnaJ and groELS operons). Prevents heat-shock induction of these operons. In Clavibacter michiganensis subsp. michiganensis (strain NCPPB 382), this protein is Heat-inducible transcription repressor HrcA.